Reading from the N-terminus, the 261-residue chain is Lipase LipV (261 aa).

The active-site Nucleophile is the serine 87. Residues aspartate 217 and histidine 240 each act as charge relay system in the active site.

Belongs to the AB hydrolase superfamily.

It carries out the reaction a carboxylic ester + H2O = an alcohol + a carboxylate + H(+). It catalyses the reaction a tetradecanoate ester + H2O = an aliphatic alcohol + tetradecanoate + H(+). The enzyme catalyses decanoate ester + H2O = decanoate + an aliphatic alcohol + H(+). The catalysed reaction is an octanoate ester + H2O = an aliphatic alcohol + octanoate + H(+). It carries out the reaction a dodecanoate ester + H2O = an aliphatic alcohol + dodecanoate + H(+). It catalyses the reaction a butanoate ester + H2O = an aliphatic alcohol + butanoate + H(+). The enzyme catalyses hexadecanoate ester + H2O = an aliphatic alcohol + hexadecanoate + H(+). The catalysed reaction is octadecanoate ester + H2O = an aliphatic alcohol + octadecanoate + H(+). Its activity is regulated as follows. Is inhibited by tetrahydrolipstatin, a specific lipase inhibitor and RHC 80267, a diacylglycerol lipase inhibitor, but not by phenylglyoxal and iodoacetate. Functionally, lipase that displays broad substrate specificity and preferentially hydrolyzes p-nitrophenyl myristate in vitro. Also shows significant activity with pNP-butyrate (68%), pNP-octanoate (82%), pNP-decanoate (90%), and pNP-laurate (74%). Is probably involved in lipid catabolism. Is active at low pH, and might play some important role in mycobacterial biology in macrophages where the bacteria encounters acidic stress. The sequence is that of Lipase LipV from Mycobacterium tuberculosis (strain ATCC 25618 / H37Rv).